The sequence spans 507 residues: Peroxisomal membrane protein PEX14 (507 aa).

2 stretches are compositionally biased toward polar residues: residues 1 to 10 and 32 to 48; these read MATHQQTQPP and EVQQ…SVFK. Residues 1-52 form a disordered region; the sequence is MATHQQTQPPSDFPALADENSQIPEATKPANEVQQATIAQDPPTSVFKNSEP. Residues 1 to 152 lie on the Peroxisomal side of the membrane; sequence MATHQQTQPP…QAAFLSRFRW (152 aa). Involved in interaction with PEX5 stretches follow at residues 58 to 65 and 78 to 97; these read IQNAIKFL and RRSF…EAFR. A helical transmembrane segment spans residues 153-173; that stretch reads YHAILAVGVLAASGAGTAVFI. The Cytoplasmic segment spans residues 174-507; sequence KRSLIPRFKS…EQQHISQEGN (334 aa). Polar residues predominate over residues 288 to 302; that stretch reads VTTARKPYTNGSNVD. Disordered stretches follow at residues 288-329, 344-394, 409-435, and 448-507; these read VTTA…PKSY, NIRE…NPRS, ANQN…QPPP, and PKPQ…QEGN. Low complexity predominate over residues 308-322; the sequence is ARSASPPAAPADSSA. Positions 378–394 are enriched in polar residues; the sequence is QDESSNGQWWQQKNPRS.

It belongs to the peroxin-14 family. In terms of assembly, interacts with PEX13; forming the PEX13-PEX14 docking complex. Interacts with PEX5 (via WxxxF/Y motifs). Expressed in flowers, siliques, leaves and roots.

The protein localises to the peroxisome membrane. Functionally, component of the PEX13-PEX14 docking complex, a translocon channel that specifically mediates the import of peroxisomal cargo proteins bound to PEX5 receptor. The PEX13-PEX14 docking complex forms a large import pore which can be opened to a diameter of about 9 nm. Mechanistically, PEX5 receptor along with cargo proteins associates with the PEX14 subunit of the PEX13-PEX14 docking complex in the cytosol, leading to the insertion of the receptor into the organelle membrane with the concomitant translocation of the cargo into the peroxisome matrix. This chain is Peroxisomal membrane protein PEX14, found in Arabidopsis thaliana (Mouse-ear cress).